A 265-amino-acid chain; its full sequence is NAD-capped RNA hydrolase NudC (265 aa).

Position 76 (Arg-76) interacts with substrate. Cys-106, Cys-109, Cys-124, and Cys-127 together coordinate Zn(2+). Tyr-132 contributes to the substrate binding site. Residues 133-256 enclose the Nudix hydrolase domain; the sequence is PRISPAMMVL…SIAHRLIRHA (124 aa). The a divalent metal cation site is built by Ala-166, Glu-182, and Glu-186. Positions 167–188 match the Nudix box motif; the sequence is GFVEPGETLEECVHRETWEEVG. 200–207 is a substrate binding site; that stretch reads QSWPFPHS. Glu-227 serves as a coordination point for a divalent metal cation. Position 249 (Ala-249) interacts with substrate.

It belongs to the Nudix hydrolase family. NudC subfamily. In terms of assembly, homodimer. The cofactor is Mg(2+). Requires Mn(2+) as cofactor. It depends on Zn(2+) as a cofactor.

The catalysed reaction is a 5'-end NAD(+)-phospho-ribonucleoside in mRNA + H2O = a 5'-end phospho-adenosine-phospho-ribonucleoside in mRNA + beta-nicotinamide D-ribonucleotide + 2 H(+). It carries out the reaction NAD(+) + H2O = beta-nicotinamide D-ribonucleotide + AMP + 2 H(+). The enzyme catalyses NADH + H2O = reduced beta-nicotinamide D-ribonucleotide + AMP + 2 H(+). Its function is as follows. mRNA decapping enzyme that specifically removes the nicotinamide adenine dinucleotide (NAD) cap from a subset of mRNAs by hydrolyzing the diphosphate linkage to produce nicotinamide mononucleotide (NMN) and 5' monophosphate mRNA. The NAD-cap is present at the 5'-end of some mRNAs and stabilizes RNA against 5'-processing. Has preference for mRNAs with a 5'-end purine. Catalyzes the hydrolysis of a broad range of dinucleotide pyrophosphates. This chain is NAD-capped RNA hydrolase NudC, found in Chromobacterium violaceum (strain ATCC 12472 / DSM 30191 / JCM 1249 / CCUG 213 / NBRC 12614 / NCIMB 9131 / NCTC 9757 / MK).